The sequence spans 187 residues: F-box protein At5g41720 (187 aa).

An F-box domain is found at 2–49 (MMNSPLDYDVLLEIMSYCPATEMAKFRLLSKECNKRSYEMSFINRHLH).

This Arabidopsis thaliana (Mouse-ear cress) protein is F-box protein At5g41720.